Reading from the N-terminus, the 136-residue chain is Psoriasis susceptibility 1 candidate gene 2 protein (136 aa).

A signal peptide spans 1 to 22; it reads MILNWKLLGILVLCLHTRGISG. The tract at residues 20 to 136 is disordered; the sequence is ISGSEGHPSH…DLDPPREEYR (117 aa). 2 stretches are compositionally biased toward pro residues: residues 44-69 and 84-116; these read PQGP…PTRP and PEPP…PPAP. Residues 118 to 136 show a composition bias toward basic and acidic residues; that stretch reads VDNRPQEEPDLDPPREEYR.

In terms of tissue distribution, expressed in skin. Also expressed in heart and skeletal muscle.

The protein localises to the secreted. In Homo sapiens (Human), this protein is Psoriasis susceptibility 1 candidate gene 2 protein (PSORS1C2).